Consider the following 195-residue polypeptide: Imidazoleglycerol-phosphate dehydratase (195 aa).

This sequence belongs to the imidazoleglycerol-phosphate dehydratase family.

The protein resides in the cytoplasm. The enzyme catalyses D-erythro-1-(imidazol-4-yl)glycerol 3-phosphate = 3-(imidazol-4-yl)-2-oxopropyl phosphate + H2O. It functions in the pathway amino-acid biosynthesis; L-histidine biosynthesis; L-histidine from 5-phospho-alpha-D-ribose 1-diphosphate: step 6/9. The polypeptide is Imidazoleglycerol-phosphate dehydratase (Haloarcula marismortui (strain ATCC 43049 / DSM 3752 / JCM 8966 / VKM B-1809) (Halobacterium marismortui)).